Consider the following 186-residue polypeptide: Probable RNA 2'-phosphotransferase (186 aa).

The protein belongs to the KptA/TPT1 family.

In terms of biological role, removes the 2'-phosphate from RNA via an intermediate in which the phosphate is ADP-ribosylated by NAD followed by a presumed transesterification to release the RNA and generate ADP-ribose 1''-2''-cyclic phosphate (APPR&gt;P). May function as an ADP-ribosylase. The protein is Probable RNA 2'-phosphotransferase of Hahella chejuensis (strain KCTC 2396).